We begin with the raw amino-acid sequence, 779 residues long: Transcription activator of gluconeogenesis BDCG_02812 (779 aa).

The segment at 1–70 is disordered; that stretch reads MTASTRNGSP…NAKDPLRPRR (70 aa). A compositionally biased stretch (polar residues) spans 25–61; sequence KSMTTTPANPPETKSQTNGKGSGTAQSSQKPASTSAN. Residues 77 to 105 constitute a DNA-binding region (zn(2)-C6 fungal-type); that stretch reads CFACQRAHLTCGDERPCQRCIKRGLQDAC. Disordered stretches follow at residues 135-163, 202-239, 285-344, 401-421, 559-590, and 655-732; these read QANT…QSVS, SVFH…SVSG, GAGD…ANPR, TNLM…PGLK, GSSL…PHTG, and FHGK…QTWG. Over residues 202–226 the composition is skewed to polar residues; sequence SVFHAQSPSSTQNFDLSSNPQTQNL. A compositionally biased stretch (low complexity) spans 227 to 238; that stretch reads SSAMSQTASSVS. 3 stretches are compositionally biased toward polar residues: residues 291-322, 333-344, and 401-416; these read PSDS…NQSP, WNPTGQGQANPR, and TNLM…SRIS. The segment covering 560-572 has biased composition (low complexity); that stretch reads SSLSSASSVRGSS. Over residues 573-586 the composition is skewed to polar residues; that stretch reads TFTPRNNNTHNSID. The segment covering 672 to 719 has biased composition (low complexity); that stretch reads TGTTTSGDVATTTATGTSTSNGANANTNGNNTNPNDPSSAASSSASSA. A compositionally biased stretch (polar residues) spans 720 to 729; the sequence is LQGPQQSPRQ.

The protein belongs to the ERT1/acuK family.

It is found in the nucleus. Functionally, transcription factor which regulates nonfermentable carbon utilization. Activator of gluconeogenetic genes. This chain is Transcription activator of gluconeogenesis BDCG_02812, found in Ajellomyces dermatitidis (strain ER-3 / ATCC MYA-2586) (Blastomyces dermatitidis).